A 161-amino-acid chain; its full sequence is Ribonuclease H (161 aa).

In terms of domain architecture, RNase H type-1 spans 11–152 (GPRPVVIHTD…ADQLARDGLT (142 aa)). Mg(2+) is bound by residues Asp20, Glu58, Asp80, and Asp144. The tract at residues 137-161 (HDENERADQLARDGLTENRMKSRIG) is disordered.

The protein belongs to the RNase H family. Monomer. Mg(2+) serves as cofactor.

The protein localises to the cytoplasm. It catalyses the reaction Endonucleolytic cleavage to 5'-phosphomonoester.. Functionally, endonuclease that specifically degrades the RNA of RNA-DNA hybrids. This chain is Ribonuclease H, found in Rhodopseudomonas palustris (strain HaA2).